Here is a 443-residue protein sequence, read N- to C-terminus: Chorionicgonadotropic hormone-like protein (443 aa).

Residues R263–M286 show a composition bias toward basic residues. Residues R263–D292 form a disordered region.

To mammalian CGHB.

The protein localises to the secreted. It localises to the cell wall. Functionally, cell wall protein that resembles the beta subunit of human chorionic gonadotropin. Stimulates growth and change in morphology. The polypeptide is Chorionicgonadotropic hormone-like protein (xcg) (Stenotrophomonas maltophilia (Pseudomonas maltophilia)).